The following is a 165-amino-acid chain: Ribosomal RNA large subunit methyltransferase H (165 aa).

Glycine 109 contacts S-adenosyl-L-methionine.

This sequence belongs to the RNA methyltransferase RlmH family. In terms of assembly, homodimer.

The protein localises to the cytoplasm. It carries out the reaction pseudouridine(1915) in 23S rRNA + S-adenosyl-L-methionine = N(3)-methylpseudouridine(1915) in 23S rRNA + S-adenosyl-L-homocysteine + H(+). Its function is as follows. Specifically methylates the pseudouridine at position 1915 (m3Psi1915) in 23S rRNA. The sequence is that of Ribosomal RNA large subunit methyltransferase H from Methylorubrum extorquens (strain CM4 / NCIMB 13688) (Methylobacterium extorquens).